Consider the following 144-residue polypeptide: MESPLGSDLARLVRIWRALIDHRLKPLELTQTHWVTLHNIHQLPPDQSQIQLAKAIGIEQPSLVRTLDQLEEKGLISRQTCASDRRAKRIKLTEKAEPLISEMEAVINKTCAEILHGISAEELEQLITLIAKLEHNIIELQAKG.

Residues 2-135 enclose the HTH marR-type domain; it reads ESPLGSDLAR…LITLIAKLEH (134 aa). A DNA-binding region (H-T-H motif) is located at residues 49–72; it reads QIQLAKAIGIEQPSLVRTLDQLEE.

It belongs to the SlyA family. In terms of assembly, homodimer.

Functionally, transcription regulator that can specifically activate or repress expression of target genes. The sequence is that of Transcriptional regulator SlyA from Shigella boydii serotype 18 (strain CDC 3083-94 / BS512).